The following is a 316-amino-acid chain: Acetyl-coenzyme A carboxylase carboxyl transferase subunit beta (316 aa).

One can recognise a CoA carboxyltransferase N-terminal domain in the interval 39–308 (LWHKCSKCGV…TPPMVLWETM (270 aa)). Positions 43, 46, 62, and 65 each coordinate Zn(2+). The C4-type zinc finger occupies 43 to 65 (CSKCGVLTYTKDLRANQMVCVEC).

The protein belongs to the AccD/PCCB family. In terms of assembly, acetyl-CoA carboxylase is a heterohexamer composed of biotin carboxyl carrier protein (AccB), biotin carboxylase (AccC) and two subunits each of ACCase subunit alpha (AccA) and ACCase subunit beta (AccD). The cofactor is Zn(2+).

Its subcellular location is the cytoplasm. It carries out the reaction N(6)-carboxybiotinyl-L-lysyl-[protein] + acetyl-CoA = N(6)-biotinyl-L-lysyl-[protein] + malonyl-CoA. Its pathway is lipid metabolism; malonyl-CoA biosynthesis; malonyl-CoA from acetyl-CoA: step 1/1. Functionally, component of the acetyl coenzyme A carboxylase (ACC) complex. Biotin carboxylase (BC) catalyzes the carboxylation of biotin on its carrier protein (BCCP) and then the CO(2) group is transferred by the transcarboxylase to acetyl-CoA to form malonyl-CoA. The polypeptide is Acetyl-coenzyme A carboxylase carboxyl transferase subunit beta (Trichormus variabilis (strain ATCC 29413 / PCC 7937) (Anabaena variabilis)).